The chain runs to 131 residues: Arsenate reductase 2 (131 aa).

Catalysis depends on nucleophile residues Cys10, Cys82, and Cys89. Cystine bridges form between Cys10–Cys82 and Cys82–Cys89.

This sequence belongs to the low molecular weight phosphotyrosine protein phosphatase family. Thioredoxin-coupled ArsC subfamily.

It localises to the cytoplasm. The catalysed reaction is arsenate + [thioredoxin]-dithiol + H(+) = arsenite + [thioredoxin]-disulfide + H2O. Functionally, catalyzes the reduction of arsenate [As(V)] to arsenite [As(III)]. This chain is Arsenate reductase 2, found in Staphylococcus saprophyticus subsp. saprophyticus (strain ATCC 15305 / DSM 20229 / NCIMB 8711 / NCTC 7292 / S-41).